A 663-amino-acid chain; its full sequence is MHHLKSPKNVSSVCFLQSARDCARLTGQTLHTMELFRPLRNIWNRAREYARAAISAAGISWMSRHVYRYPTLMLRNLGARQPATQNWPLYLYPPPHFLIGYQYVVRVCNDYVFETRAYSRLVYRETVRLDQQIVDWSTMANCSYTINAGAYHRFIDLENFDETLRQIQQAVLAERVVADLALIQPLRGFGRTEMADLPPQRRNVPVERFLQEQCMNLGECQDQAWGFANRIRIQQAGRRDLIILTTIRRLRCAYFNFLLSHPPPNRNNTERASPMLSLPCDCDWLEAFVQRFSDPVDAQSLRFETAASTERVVAHVIDALSLPQPAARPLTELRGGAFELRPREHGRAVTQEMRIRRGEMVQRFIESLPLPTRRRRVARPAPPSPSPSPEPVELEMPPLEGEEEEEEEELPPRSFAEEVRAAVAEVIRLLQEELTVSARNEQFFNFAVDFYEAINMLEREGNINESTIRRWVIYFFIVEHIATTLNYLHHHLRLSPVFARHVELNLGQVVMRARDEDGAVIYSRVWNEPGTNAFSQLMRRISTDLAATVHRAGRGELDEEEIERFMTDIAYRDHSGDVEEIIRQAELNDASINSVDLSFRFKVTGPVAFTQHPEIQRINRRVVQHASDLRQQLQPMPELNDPVQLPPLRPERQRPPLGPRRPL.

The Nuclear localization signal motif lies at serine 367–arginine 376. The interval arginine 374–serine 414 is disordered. The segment covering proline 380–glutamate 390 has biased composition (pro residues). A compositionally biased stretch (acidic residues) spans glutamate 400–glutamate 409. Serine 575 is subject to O-(5'-phospho-DNA)-serine. The segment at glutamine 632–leucine 663 is disordered.

This sequence belongs to the adenoviridae terminal protein family. As to quaternary structure, heterodimer with the polymerase; this heterodimer binds to bp 9 to 18 of the genome. Interacts with host POU2F1; POU2F1 binds to the auxiliary sequences in the inverted terminal repeats and tethers the pTP-POL heterodimer to the origin DNA thereby participating in the assembly of the pre-initiation complex (POL-TP-DBP-NFIA-POU2F1). In terms of processing, preterminal protein is used to replicate viral genome, upon genomic encapsidation it is processed first into iTP and finally into TP by adenovirus protease.

It localises to the host nucleus matrix. Its function is as follows. Protein covalently bound to the viral DNA that acts as a primer for viral genomic replication by DNA strand displacement. Assembles on the viral origin of replication in an initiation complex with viral polymerase, DBP, host NFIA and host POU2F1/OCT1. During initiation, the polymerase covalently couples the first dCTP with Ser-580 of pTP. The terminal protein stimulates the template activity over 20 fold compared to protein-free templates. Neo-synthesized viral genomes are linked to two preterminal proteins, one for each 5' end. These new genomes are encapsidated in the nucleus, and during capsid maturation by viral protease, preterminal protein is first cleaved into intermediary (iTP), then into mature TP. May play a role in host nuclear matrix localization of genomic DNA. The protein is Preterminal protein of Bos taurus (Bovine).